Consider the following 129-residue polypeptide: Small ribosomal subunit protein bS6 (129 aa).

Positions 103-129 (LKQKEERAERAPRREERAEAKPEAAAE) are disordered. Residues 104-129 (KQKEERAERAPRREERAEAKPEAAAE) are compositionally biased toward basic and acidic residues.

Belongs to the bacterial ribosomal protein bS6 family.

In terms of biological role, binds together with bS18 to 16S ribosomal RNA. The protein is Small ribosomal subunit protein bS6 of Vibrio campbellii (strain ATCC BAA-1116).